The primary structure comprises 515 residues: Mucin-like protein Glc1.8b (515 aa).

Positions 1–20 (MSQITLIILVLAIGFSCTKS) are cleaved as a signal peptide. Residues 21–467 (HPINSTRDGE…ANDIKKPAFP (447 aa)) are Extracellular-facing. N-linked (GlcNAc...) asparagine; by host glycosylation is found at N24, N45, N51, N60, N85, N93, N102, N123, N129, N138, N180, N201, N207, N216, N258, N279, N285, N294, N319, N327, N336, N357, N363, N372, N397, N405, N413, N434, and N441. A disordered region spans residues 80–114 (SKKDENITGQSEINTSAKSQPINSTRDGEDSGTDL). Over residues 86–104 (ITGQSEINTSAKSQPINST) the composition is skewed to polar residues. Residues 314-358 (SKKDENITGQSEINTSAKSQPINSTRDGEDSGTDLKNLLTDPANT) are disordered. The span at 320–338 (ITGQSEINTSAKSQPINST) shows a compositional bias: polar residues. Residues 393-413 (RKDENVTGQSEFNISTNSNLN) are disordered. Residues 468–488 (YCIILITFQIVTVGMIIYLVF) form a helical membrane-spanning segment. At 489 to 515 (RTMRKPCQSERAIPLNSFGFGNNSSYE) the chain is on the cytoplasmic side.

This sequence belongs to the polydnaviridae Glc1.8 protein family.

The protein resides in the host membrane. In terms of biological role, involved in suppression of the insect cellular immune response. Inhibits host hemocyte adhesion and phagocytosis. The chain is Mucin-like protein Glc1.8b (O16) from Microplitis demolitor (Parasitoid wasp).